The following is a 389-amino-acid chain: Lipid-A-disaccharide synthase (389 aa).

It belongs to the LpxB family.

It carries out the reaction a lipid X + a UDP-2-N,3-O-bis[(3R)-3-hydroxyacyl]-alpha-D-glucosamine = a lipid A disaccharide + UDP + H(+). Its pathway is bacterial outer membrane biogenesis; LPS lipid A biosynthesis. In terms of biological role, condensation of UDP-2,3-diacylglucosamine and 2,3-diacylglucosamine-1-phosphate to form lipid A disaccharide, a precursor of lipid A, a phosphorylated glycolipid that anchors the lipopolysaccharide to the outer membrane of the cell. The chain is Lipid-A-disaccharide synthase from Burkholderia ambifaria (strain ATCC BAA-244 / DSM 16087 / CCUG 44356 / LMG 19182 / AMMD) (Burkholderia cepacia (strain AMMD)).